The following is a 637-amino-acid chain: Transmembrane 9 superfamily member 10 (637 aa).

A signal peptide spans 1–23 (MAKVRILIFTLVLFFSLNVHIHG). Residues 24-274 (FYLPGVAPQD…YLLMADDQIH (251 aa)) are Lumenal-facing. The helical transmembrane segment at 275–295 (WFSIVNSMMIVLFLSGMVAMI) threads the bilayer. Topologically, residues 296–344 (MLRTLYRDISNYNQLESHEEALEETGWKLVHGDVFRPPTNPELLCVYAG) are cytoplasmic. The chain crosses the membrane as a helical span at residues 345–365 (TGVQCFGMILVTMIFACLGFL). The Lumenal segment spans residues 366–370 (SPSNR). Residues 371-391 (GGLMTAMLLLWVFMGLLAGYA) traverse the membrane as a helical segment. Residues 392–411 (SSRLYKTLRGTEWKRNALKT) lie on the Cytoplasmic side of the membrane. Residues 412–432 (AFMFPATVFVAFFVLNAIIWG) traverse the membrane as a helical segment. Over 433-444 (QKSSGAVPFGTM) the chain is Lumenal. Residues 445-465 (FALVVLWFGISVPLVFIGGYI) traverse the membrane as a helical segment. Topologically, residues 466 to 494 (GFRKPAPEDPVKTNKIPRQIPTQAWYMNP) are cytoplasmic. The helical transmembrane segment at 495-515 (IFSILIGGILPFGAVFIELFF) threads the bilayer. The Lumenal segment spans residues 516–527 (ILTSIWLHQFYY). A helical transmembrane segment spans residues 528–548 (IFGFLFIVFIILIITCAEITV). The Cytoplasmic segment spans residues 549 to 566 (VLCYFQLCSEDYQWWWRS). A helical transmembrane segment spans residues 567 to 587 (YLTSGSSAVYLFLYAVFYFYT). The Lumenal segment spans residues 588–593 (KLEITK). The helical transmembrane segment at 594 to 614 (LVSAVLYFGYMLIVSYVFFVF) threads the bilayer. Residues 615–637 (TGAIGFYACFWFTRLIYSSVKID) are Cytoplasmic-facing. The Endoplasmic reticulum export signal signature appears at 626–631 (FTRLIY). The short motif at 635–637 (KID) is the Golgi retention signal element.

Belongs to the nonaspanin (TM9SF) (TC 9.A.2) family.

Its subcellular location is the endosome membrane. The protein localises to the golgi apparatus membrane. This is Transmembrane 9 superfamily member 10 from Arabidopsis thaliana (Mouse-ear cress).